A 306-amino-acid chain; its full sequence is MKIGTRGSALALTQTRQIAARLQGQYPEMHLEIVVIKTSGDIQKDVPLAKIGGKGLFIKEIEEALLAGTVDLAVHSMKDLPAELPEGLQIAAVPRREDPRDVLISGICREFDNLPAGARIGTGSLRRSVQLRDWRPDLEIVPLRGNLDTRIRKVAQAALDGVVVAAAGIRRMGWAEKVTQFIPTEKMLPAVGQGVLCLETREEDEDLKAGLAFLEDKRTRREVTAERAFLRRLGGGCTLPVAAFAEQRGDVLTIRGMVGSLNERTMIRQEIYGSVEQAVDLGTELAERLLDGGGRILLEHLEDGQP.

Position 237 is an S-(dipyrrolylmethanemethyl)cysteine (cysteine 237).

The protein belongs to the HMBS family. In terms of assembly, monomer. The cofactor is dipyrromethane.

It catalyses the reaction 4 porphobilinogen + H2O = hydroxymethylbilane + 4 NH4(+). The protein operates within porphyrin-containing compound metabolism; protoporphyrin-IX biosynthesis; coproporphyrinogen-III from 5-aminolevulinate: step 2/4. Functionally, tetrapolymerization of the monopyrrole PBG into the hydroxymethylbilane pre-uroporphyrinogen in several discrete steps. The polypeptide is Porphobilinogen deaminase (Syntrophus aciditrophicus (strain SB)).